Here is a 1475-residue protein sequence, read N- to C-terminus: Mediator of RNA polymerase II transcription subunit 1.1 (1475 aa).

Disordered stretches follow at residues 579–600 (STIGRTRPQPRPKREPNQLTSM), 645–894 (GLAS…KMRE), and 908–1475 (PDVE…IDDE). The span at 655–666 (PVAAAAAAPGGP) shows a compositional bias: low complexity. Residues 755 to 766 (QRSSSEQHNPNP) are compositionally biased toward polar residues. The segment covering 767–800 (HQMSQYQMQQYQQNQQFRMHQMQQQQQQQFQMQS) has biased composition (low complexity). Acidic residues predominate over residues 810-819 (TDEDSDEECD). The segment covering 829–838 (STSSRMSSVP) has biased composition (low complexity). A compositionally biased stretch (pro residues) spans 869-880 (TPSPLSAPPKPF). Low complexity predominate over residues 915–929 (QQLSSSSSSSQAEAS). Residues 941 to 952 (PPKPSSSSAPPP) are compositionally biased toward pro residues. Low complexity-rich tracts occupy residues 969–989 (QQEQALQKQLQQQESVESELA) and 1037–1049 (QKPTDTSSQSTSS). 3 stretches are compositionally biased toward basic and acidic residues: residues 1052-1070 (PPKKEPADEQPEREKEKLI), 1080-1148 (VVDD…EKEP), and 1155-1180 (EKKDEKEKDRREPERKKGKSDGKEYS). Positions 1098-1135 (DRDRDEDREKVRDKEDKAQREKDKKEKERERRRQRDRD) form a coiled coil. A compositionally biased stretch (polar residues) spans 1181-1193 (KASTTSLIPTLSL). Positions 1199 to 1215 (PKKDTVEEEKKDVKEEA) are enriched in basic and acidic residues. Over residues 1242-1252 (APVAPAVQQQQ) the composition is skewed to low complexity. Pro residues predominate over residues 1281–1291 (PLQPPPPPQMT). Over residues 1308-1317 (PGSSRPSGNR) the composition is skewed to polar residues. 2 stretches are compositionally biased toward pro residues: residues 1320–1334 (PLPPPPPMIRGPPPD) and 1425–1440 (PPAPPPPQMIPLPKDP).

It belongs to the Mediator complex subunit 1 family. As to quaternary structure, component of the Mediator complex.

Its subcellular location is the nucleus. In terms of biological role, component of the Mediator complex, a coactivator involved in the regulated transcription of nearly all RNA polymerase II-dependent genes. Mediator functions as a bridge to convey information from gene-specific regulatory proteins to the basal RNA polymerase II transcription machinery. Mediator is recruited to promoters by direct interactions with regulatory proteins and serves as a scaffold for the assembly of a functional preinitiation complex with RNA polymerase II and the general transcription factors. The chain is Mediator of RNA polymerase II transcription subunit 1.1 (sop-3) from Caenorhabditis elegans.